A 548-amino-acid polypeptide reads, in one-letter code: Folylpolyglutamate synthase (548 aa).

An ATP-binding site is contributed by 130–133 (GKGS). Mg(2+) contacts are provided by S157, E234, and H262. Residues R382 and D396 each contribute to the ATP site.

The protein belongs to the folylpolyglutamate synthase family. A monovalent cation is required as a cofactor.

It localises to the mitochondrion inner membrane. It is found in the mitochondrion matrix. The protein resides in the cytoplasm. It catalyses the reaction (6S)-5,6,7,8-tetrahydrofolyl-(gamma-L-Glu)(n) + L-glutamate + ATP = (6S)-5,6,7,8-tetrahydrofolyl-(gamma-L-Glu)(n+1) + ADP + phosphate + H(+). It participates in cofactor biosynthesis; tetrahydrofolylpolyglutamate biosynthesis. Functionally, catalyzes conversion of folates to polyglutamate derivatives allowing concentration of folate compounds in the cell and the intracellular retention of these cofactors, which are important substrates for most of the folate-dependent enzymes that are involved in one-carbon transfer reactions involved in purine, pyrimidine and amino acid synthesis. Required for methionine synthesis and maintenance of intact mitochondrial DNA. Involved in telomere maintenance. The chain is Folylpolyglutamate synthase from Saccharomyces cerevisiae (strain AWRI796) (Baker's yeast).